The primary structure comprises 166 residues: 2-C-methyl-D-erythritol 2,4-cyclodiphosphate synthase (166 aa).

The a divalent metal cation site is built by Asp-17 and His-19. Residues 17–19 and 43–44 each bind 4-CDP-2-C-methyl-D-erythritol 2-phosphate; these read DSH and HS. His-51 lines the a divalent metal cation pocket. Residues 65 to 67, 109 to 115, and Arg-151 each bind 4-CDP-2-C-methyl-D-erythritol 2-phosphate; these read DIG and AQKPKMA.

This sequence belongs to the IspF family. Homotrimer. The cofactor is a divalent metal cation.

The enzyme catalyses 4-CDP-2-C-methyl-D-erythritol 2-phosphate = 2-C-methyl-D-erythritol 2,4-cyclic diphosphate + CMP. The protein operates within isoprenoid biosynthesis; isopentenyl diphosphate biosynthesis via DXP pathway; isopentenyl diphosphate from 1-deoxy-D-xylulose 5-phosphate: step 4/6. Its function is as follows. Involved in the biosynthesis of isopentenyl diphosphate (IPP) and dimethylallyl diphosphate (DMAPP), two major building blocks of isoprenoid compounds. Catalyzes the conversion of 4-diphosphocytidyl-2-C-methyl-D-erythritol 2-phosphate (CDP-ME2P) to 2-C-methyl-D-erythritol 2,4-cyclodiphosphate (ME-CPP) with a corresponding release of cytidine 5-monophosphate (CMP). The polypeptide is 2-C-methyl-D-erythritol 2,4-cyclodiphosphate synthase (Rhodopirellula baltica (strain DSM 10527 / NCIMB 13988 / SH1)).